The following is a 144-amino-acid chain: Large ribosomal subunit protein uL15 (144 aa).

The tract at residues 1-57 (MKLNDLSPAPGSRREKHRPGRGIGSGLGKTGGRGHKGQTSRSGGTIAPGFEGGQQPL) is disordered. Over residues 21 to 31 (RGIGSGLGKTG) the composition is skewed to gly residues.

This sequence belongs to the universal ribosomal protein uL15 family. As to quaternary structure, part of the 50S ribosomal subunit.

In terms of biological role, binds to the 23S rRNA. The chain is Large ribosomal subunit protein uL15 from Pseudomonas fluorescens (strain ATCC BAA-477 / NRRL B-23932 / Pf-5).